We begin with the raw amino-acid sequence, 436 residues long: Histone acetyltransferase type B subunit 2 (436 aa).

WD repeat units lie at residues 136–176 (DHKG…SLPT), 187–227 (GHTK…KGNK), 237–277 (HHSS…TTRA), 284–324 (QHRD…TKLH), and 328–368 (SHTD…EEQT). The interval 370–374 (EDAQD) is interaction with the histone H4 N-terminus. Residues 385-425 (GHTNRISDFSWNLNDPWVLCSAAEDNLLQVWKVADAIVGKD) form a WD 6 repeat.

Belongs to the WD repeat RBAP46/RBAP48/MSI1 family. Component of the HAT-B complex composed of at least hat1 and hat2. The HAT-B complex binds to histone H4 tail.

The protein resides in the cytoplasm. The protein localises to the nucleus. In terms of biological role, regulatory subunit of the histone acetylase B (HAT-B) complex. The complex acetylates 'Lys-12' of histone H4 which is required for telomeric silencing. The sequence is that of Histone acetyltransferase type B subunit 2 (hat2) from Aspergillus fumigatus (strain ATCC MYA-4609 / CBS 101355 / FGSC A1100 / Af293) (Neosartorya fumigata).